The sequence spans 416 residues: Argininosuccinate synthase (416 aa).

ATP is bound by residues 19–27 (AYSGGLDTS) and Ala-46. 2 residues coordinate L-citrulline: Tyr-97 and Ser-102. An ATP-binding site is contributed by Gly-127. L-aspartate-binding residues include Thr-129, Asn-133, and Asp-134. Asn-133 contributes to the L-citrulline binding site. Residues Arg-137, Ser-188, Ser-197, Glu-273, and Tyr-285 each coordinate L-citrulline.

Belongs to the argininosuccinate synthase family. Type 1 subfamily. As to quaternary structure, homotetramer.

The protein resides in the cytoplasm. It carries out the reaction L-citrulline + L-aspartate + ATP = 2-(N(omega)-L-arginino)succinate + AMP + diphosphate + H(+). It participates in amino-acid biosynthesis; L-arginine biosynthesis; L-arginine from L-ornithine and carbamoyl phosphate: step 2/3. The polypeptide is Argininosuccinate synthase (Granulibacter bethesdensis (strain ATCC BAA-1260 / CGDNIH1)).